The following is a 340-amino-acid chain: Guanine nucleotide-binding protein subunit beta-1 (340 aa).

WD repeat units follow at residues 53–83 (GHLA…IVWD), 95–125 (LRSS…SIYS), 141–170 (GHTG…ALWD), 182–212 (GHTG…KLWD), 224–254 (GHES…RLFD), 268–298 (NIIC…NVWD), and 310–340 (GHDN…KIWN).

This sequence belongs to the WD repeat G protein beta family. In terms of assembly, g proteins are composed of 3 units, alpha, beta and gamma. Interacts with G protein gamma subunits gpc-1 and gpc-2 and with egl-10 and eat-16. Interacts with goa-1 (in GDP-bound form).

In terms of biological role, guanine nucleotide-binding proteins (G proteins) are involved as a modulator or transducer in various transmembrane signaling systems. The beta and gamma chains are required for the GTPase activity, for replacement of GDP by GTP, and for G protein-effector interaction. In the early embryo, controls the magnitude of the forces acting on centrosomes but is not required for generating asymmetric forces. The polypeptide is Guanine nucleotide-binding protein subunit beta-1 (gpb-1) (Caenorhabditis briggsae).